The following is a 538-amino-acid chain: Non-specific phospholipase C4 (538 aa).

The segment at 91 to 112 (KPWDSGKPDPNPGHPNMSGFAQ) is disordered.

It belongs to the bacterial phospholipase C family. In terms of tissue distribution, expressed in root tips, cotyledons, on leaf margins, stems, young anthers and funiculus.

It localises to the cell membrane. It catalyses the reaction a 1,2-diacyl-sn-glycero-3-phosphocholine + H2O = phosphocholine + a 1,2-diacyl-sn-glycerol + H(+). Functionally, non-specific phospholipase C (PLC) which assumes major PLC activity during inorganic phosphate starvation. Substrate preference is phosphatidylcholine (PC), but can also hydrolyze phosphatidylethanolamine (PE) with lower efficiency. Has no activity toward phosphatidic acid (PA). Plays an important role in the supply of both inorganic phosphate and diacylglycerol from membrane-localized phospholipids during phosphate deprivation. May be required for lipid-derived signaling molecules that positively modulate abscisic acid (ABA) response and promote plant tolerance to drought and salt stresses. May be involved in brassinolide-mediated signaling in root development. The chain is Non-specific phospholipase C4 (NPC4) from Arabidopsis thaliana (Mouse-ear cress).